We begin with the raw amino-acid sequence, 426 residues long: 3-phosphoshikimate 1-carboxyvinyltransferase (426 aa).

Residues Lys22, Ser23, and Arg27 each contribute to the 3-phosphoshikimate site. A phosphoenolpyruvate-binding site is contributed by Lys22. Phosphoenolpyruvate is bound by residues Gly96 and Arg124. Residues Ser170, Ser171, Gln172, Ser198, Asp314, Asn337, and Lys341 each contribute to the 3-phosphoshikimate site. Phosphoenolpyruvate is bound at residue Gln172. The active-site Proton acceptor is Asp314. Phosphoenolpyruvate is bound by residues Arg345, Arg387, and Lys412.

Belongs to the EPSP synthase family. As to quaternary structure, monomer.

It is found in the cytoplasm. The catalysed reaction is 3-phosphoshikimate + phosphoenolpyruvate = 5-O-(1-carboxyvinyl)-3-phosphoshikimate + phosphate. It functions in the pathway metabolic intermediate biosynthesis; chorismate biosynthesis; chorismate from D-erythrose 4-phosphate and phosphoenolpyruvate: step 6/7. Functionally, catalyzes the transfer of the enolpyruvyl moiety of phosphoenolpyruvate (PEP) to the 5-hydroxyl of shikimate-3-phosphate (S3P) to produce enolpyruvyl shikimate-3-phosphate and inorganic phosphate. In Shewanella oneidensis (strain ATCC 700550 / JCM 31522 / CIP 106686 / LMG 19005 / NCIMB 14063 / MR-1), this protein is 3-phosphoshikimate 1-carboxyvinyltransferase.